We begin with the raw amino-acid sequence, 145 residues long: MTSILNTLRFLEKTSFYNCNDSITKEKIKIKHKGMLFVFYKPKHSTVVKYLSGGGIYHDDLVVLGKVTINDLKMMLFYMDLSYHGVTSSGAIYKLGSSIDRLSLNRTIVTKVNNNYNNYNNYNNYNCYNNYNCYNYDDTFFDDDD.

It belongs to the orthopoxvirus OPG159 protein family.

This is Protein OPG159 (OPG159) from Cynomys gunnisoni (Gunnison's prairie dog).